The primary structure comprises 28 residues: Aspartate aminotransferase, mitochondrial (28 aa).

The protein belongs to the class-I pyridoxal-phosphate-dependent aminotransferase family. As to quaternary structure, homodimer. Pyridoxal 5'-phosphate serves as cofactor.

The protein localises to the mitochondrion matrix. The enzyme catalyses L-aspartate + 2-oxoglutarate = oxaloacetate + L-glutamate. In terms of biological role, plays a key role in amino acid metabolism. Important for metabolite exchange between mitochondria and cytosol. This Catharanthus roseus (Madagascar periwinkle) protein is Aspartate aminotransferase, mitochondrial.